Reading from the N-terminus, the 236-residue chain is uncharacterized protein (236 aa).

It localises to the virion. This is an uncharacterized protein from Acanthamoeba polyphaga (Amoeba).